A 98-amino-acid chain; its full sequence is Large ribosomal subunit protein uL23 (98 aa).

It belongs to the universal ribosomal protein uL23 family. In terms of assembly, part of the 50S ribosomal subunit. Contacts protein L29, and trigger factor when it is bound to the ribosome.

Its function is as follows. One of the early assembly proteins it binds 23S rRNA. One of the proteins that surrounds the polypeptide exit tunnel on the outside of the ribosome. Forms the main docking site for trigger factor binding to the ribosome. In Nitrosococcus oceani (strain ATCC 19707 / BCRC 17464 / JCM 30415 / NCIMB 11848 / C-107), this protein is Large ribosomal subunit protein uL23.